We begin with the raw amino-acid sequence, 205 residues long: GTP cyclohydrolase-2 (205 aa).

49-53 (RLHSE) is a binding site for GTP. 3 residues coordinate Zn(2+): Cys54, Cys65, and Cys67. GTP-binding positions include Gln70, 92 to 94 (EGR), and Thr114. The active-site Proton acceptor is the Asp126. Arg128 serves as the catalytic Nucleophile. The GTP site is built by Thr149 and Lys154.

It belongs to the GTP cyclohydrolase II family. It depends on Zn(2+) as a cofactor.

The catalysed reaction is GTP + 4 H2O = 2,5-diamino-6-hydroxy-4-(5-phosphoribosylamino)-pyrimidine + formate + 2 phosphate + 3 H(+). Its pathway is cofactor biosynthesis; riboflavin biosynthesis; 5-amino-6-(D-ribitylamino)uracil from GTP: step 1/4. Functionally, catalyzes the conversion of GTP to 2,5-diamino-6-ribosylamino-4(3H)-pyrimidinone 5'-phosphate (DARP), formate and pyrophosphate. This Pseudomonas aeruginosa (strain LESB58) protein is GTP cyclohydrolase-2.